The following is a 144-amino-acid chain: 3-hydroxyacyl-[acyl-carrier-protein] dehydratase FabZ (144 aa).

Residue His51 is part of the active site.

Belongs to the thioester dehydratase family. FabZ subfamily.

Its subcellular location is the cytoplasm. It catalyses the reaction a (3R)-hydroxyacyl-[ACP] = a (2E)-enoyl-[ACP] + H2O. Functionally, involved in unsaturated fatty acids biosynthesis. Catalyzes the dehydration of short chain beta-hydroxyacyl-ACPs and long chain saturated and unsaturated beta-hydroxyacyl-ACPs. The chain is 3-hydroxyacyl-[acyl-carrier-protein] dehydratase FabZ from Lactococcus lactis subsp. cremoris (strain SK11).